Consider the following 200-residue polypeptide: NADH-quinone oxidoreductase subunit C (200 aa).

Belongs to the complex I 30 kDa subunit family. In terms of assembly, NDH-1 is composed of 14 different subunits. Subunits NuoB, C, D, E, F, and G constitute the peripheral sector of the complex.

The protein localises to the cell inner membrane. The enzyme catalyses a quinone + NADH + 5 H(+)(in) = a quinol + NAD(+) + 4 H(+)(out). In terms of biological role, NDH-1 shuttles electrons from NADH, via FMN and iron-sulfur (Fe-S) centers, to quinones in the respiratory chain. The immediate electron acceptor for the enzyme in this species is believed to be ubiquinone. Couples the redox reaction to proton translocation (for every two electrons transferred, four hydrogen ions are translocated across the cytoplasmic membrane), and thus conserves the redox energy in a proton gradient. This Ralstonia nicotianae (strain ATCC BAA-1114 / GMI1000) (Ralstonia solanacearum) protein is NADH-quinone oxidoreductase subunit C.